We begin with the raw amino-acid sequence, 333 residues long: Acetoin:2,6-dichlorophenolindophenol oxidoreductase subunit alpha (333 aa).

Tetramer of 2 alpha and 2 beta subunits. It depends on thiamine diphosphate as a cofactor.

Its pathway is ketone degradation; acetoin degradation. Its function is as follows. Catalyzes the 2,6-dichlorophenolindophenol-dependent cleavage of acetoin into acetate and acetaldehyde, in vitro. The alpha subunit is probably the catalytic subunit of the enzyme. In Cupriavidus necator (strain ATCC 17699 / DSM 428 / KCTC 22496 / NCIMB 10442 / H16 / Stanier 337) (Ralstonia eutropha), this protein is Acetoin:2,6-dichlorophenolindophenol oxidoreductase subunit alpha (acoA).